Reading from the N-terminus, the 272-residue chain is Carbonic anhydrase (272 aa).

Zn(2+)-binding residues include C39, H98, and C101.

The protein belongs to the beta-class carbonic anhydrase family. In terms of assembly, a hexamer formed by a trimer of dimers. Purified from carboxysomes with the both RuBisCO subunits and the full-length form of CcmM, probably interacts with the N-terminus of CcmM. The cofactor is Zn(2+).

The protein localises to the carboxysome. The catalysed reaction is hydrogencarbonate + H(+) = CO2 + H2O. Its function is as follows. Reversible hydration of carbon dioxide. Essential to photosynthetic carbon dioxide fixation, supplies CO(2) to RuBisCO (ribulose bisphosphate carboxylase, rbcL-rbcS) in the carboxysome. Loss of activity results in limitation of CO(2) availability to RuBisCO located in the cytoplasm. This Synechococcus elongatus (strain ATCC 33912 / PCC 7942 / FACHB-805) (Anacystis nidulans R2) protein is Carbonic anhydrase.